Consider the following 764-residue polypeptide: 5-methyltetrahydropteroyltriglutamate--homocysteine methyltransferase (764 aa).

5-methyltetrahydropteroyltri-L-glutamate-binding positions include 16 to 19 and Lys115; that span reads RELK. L-homocysteine contacts are provided by residues 435–437 and Glu488; that span reads IGS. L-methionine-binding positions include 435-437 and Glu488; that span reads IGS. Residues 519–520 and Trp565 contribute to the 5-methyltetrahydropteroyltri-L-glutamate site; that span reads RC. Asp603 contributes to the L-homocysteine binding site. Asp603 serves as a coordination point for L-methionine. A 5-methyltetrahydropteroyltri-L-glutamate-binding site is contributed by Glu609. Zn(2+) contacts are provided by His645, Cys647, and Glu669. His698 (proton donor) is an active-site residue. Position 730 (Cys730) interacts with Zn(2+).

The protein belongs to the vitamin-B12 independent methionine synthase family. Zn(2+) serves as cofactor.

The enzyme catalyses 5-methyltetrahydropteroyltri-L-glutamate + L-homocysteine = tetrahydropteroyltri-L-glutamate + L-methionine. It functions in the pathway amino-acid biosynthesis; L-methionine biosynthesis via de novo pathway; L-methionine from L-homocysteine (MetE route): step 1/1. Functionally, catalyzes the transfer of a methyl group from 5-methyltetrahydrofolate to homocysteine resulting in methionine formation. The polypeptide is 5-methyltetrahydropteroyltriglutamate--homocysteine methyltransferase (Burkholderia mallei (strain NCTC 10247)).